Reading from the N-terminus, the 293-residue chain is Ribosomal protein L11 methyltransferase (293 aa).

S-adenosyl-L-methionine contacts are provided by threonine 145, glycine 166, aspartate 188, and asparagine 230.

It belongs to the methyltransferase superfamily. PrmA family.

The protein resides in the cytoplasm. It catalyses the reaction L-lysyl-[protein] + 3 S-adenosyl-L-methionine = N(6),N(6),N(6)-trimethyl-L-lysyl-[protein] + 3 S-adenosyl-L-homocysteine + 3 H(+). Its function is as follows. Methylates ribosomal protein L11. In Shewanella piezotolerans (strain WP3 / JCM 13877), this protein is Ribosomal protein L11 methyltransferase.